Consider the following 201-residue polypeptide: Inosine triphosphate pyrophosphatase (201 aa).

16–21 (TGNAKK) contributes to the ITP binding site. Residue glutamate 44 coordinates Mg(2+). Residues lysine 56, 72-73 (DT), lysine 89, 148-151 (FGWD), lysine 171, and 176-177 (HR) each bind ITP.

It belongs to the HAM1 NTPase family. As to quaternary structure, homodimer. Requires Mg(2+) as cofactor. It depends on Mn(2+) as a cofactor.

It localises to the cytoplasm. It carries out the reaction ITP + H2O = IMP + diphosphate + H(+). The catalysed reaction is dITP + H2O = dIMP + diphosphate + H(+). The enzyme catalyses XTP + H2O = XMP + diphosphate + H(+). Its function is as follows. Pyrophosphatase that hydrolyzes non-canonical purine nucleotides such as inosine triphosphate (ITP), deoxyinosine triphosphate (dITP) or xanthosine 5'-triphosphate (XTP) to their respective monophosphate derivatives. The enzyme does not distinguish between the deoxy- and ribose forms. Probably excludes non-canonical purines from RNA and DNA precursor pools, thus preventing their incorporation into RNA and DNA and avoiding chromosomal lesions. This is Inosine triphosphate pyrophosphatase from Zea mays (Maize).